We begin with the raw amino-acid sequence, 543 residues long: Zinc finger protein 34 (543 aa).

Residues Val-14–Val-87 enclose the KRAB domain. The interval Gln-84 to Val-151 is disordered. Positions Glu-124–Gly-147 are enriched in basic and acidic residues. 12 C2H2-type zinc fingers span residues His-179–His-201, Tyr-234–His-256, Tyr-262–His-284, Tyr-290–His-312, Tyr-318–His-340, Tyr-346–His-368, Tyr-374–His-396, Tyr-402–His-424, Tyr-430–His-452, Tyr-458–His-480, Tyr-486–His-508, and Tyr-514–His-536.

Belongs to the krueppel C2H2-type zinc-finger protein family.

It is found in the nucleus. Functionally, may be involved in transcriptional regulation. The chain is Zinc finger protein 34 (ZNF34) from Bos taurus (Bovine).